Reading from the N-terminus, the 404-residue chain is Multidrug resistance protein MdtG (404 aa).

Helical transmembrane passes span 19 to 39 (LGCF…PLYV), 56 to 76 (LVFS…GGLA), 90 to 110 (LGMA…QFLI), 113 to 133 (ALLG…ATQV), 144 to 164 (TLST…GLLA), 171 to 191 (PVFF…FFFI), 222 to 242 (LFVT…ILTL), 254 to 274 (IAFI…LSAP), 288 to 308 (ILIV…FVQT), 317 to 337 (FLLG…LVYN), and 376 to 396 (AVFC…WNSL).

This sequence belongs to the major facilitator superfamily. DHA1 family. MdtG (TC 2.A.1.2.20) subfamily.

The protein resides in the cell inner membrane. This Salmonella schwarzengrund (strain CVM19633) protein is Multidrug resistance protein MdtG.